Here is a 308-residue protein sequence, read N- to C-terminus: MLSTVSVFFMSIFVLLCFLGILANGFIVLMLSREWLWRGRLLPSDMILLSLGTSRFCQQCVGLVNSFYYSLHLVEYSRSLARQLISLHMDFLNSATFWFGTWLSVLFCIKIANFSHPAFLWLKWRFPALVPWLLLGSILVSFIVTLMFFWGNHTVYQAFLRRKFSGNTTFKEWNRRLEIDYFMPLKLVTTSIPCSLFLVSILLLINSLRRHSQRMQHNAHSLQDPNTQAHSRALKSLISFLVLYALSYVSMVIDATVVISSDNVWYWPWQIILYLCMSVHPFILITNNLKFRGTFRQLLLLARGFWVT.

Over 1–6 (MLSTVS) the chain is Extracellular. The helical transmembrane segment at 7–27 (VFFMSIFVLLCFLGILANGFI) threads the bilayer. The Cytoplasmic portion of the chain corresponds to 28–60 (VLMLSREWLWRGRLLPSDMILLSLGTSRFCQQC). A helical membrane pass occupies residues 61–81 (VGLVNSFYYSLHLVEYSRSLA). Topologically, residues 82–90 (RQLISLHMD) are extracellular. The helical transmembrane segment at 91 to 111 (FLNSATFWFGTWLSVLFCIKI) threads the bilayer. The Cytoplasmic segment spans residues 112-128 (ANFSHPAFLWLKWRFPA). A helical membrane pass occupies residues 129 to 149 (LVPWLLLGSILVSFIVTLMFF). The Extracellular portion of the chain corresponds to 150–184 (WGNHTVYQAFLRRKFSGNTTFKEWNRRLEIDYFMP). N-linked (GlcNAc...) asparagine glycosylation is found at N152 and N167. Residues 185-205 (LKLVTTSIPCSLFLVSILLLI) traverse the membrane as a helical segment. Topologically, residues 206–239 (NSLRRHSQRMQHNAHSLQDPNTQAHSRALKSLIS) are cytoplasmic. A helical membrane pass occupies residues 240 to 260 (FLVLYALSYVSMVIDATVVIS). Over 261 to 264 (SDNV) the chain is Extracellular. A helical membrane pass occupies residues 265–285 (WYWPWQIILYLCMSVHPFILI). Over 286-308 (TNNLKFRGTFRQLLLLARGFWVT) the chain is Cytoplasmic.

Belongs to the G-protein coupled receptor T2R family. Expressed in subsets of taste receptor cells of the tongue and palate epithelium and exclusively in gustducin-positive cells. Expressed in 15% taste bud cells in circumvallate and foliate papillae but only in 2% in fungiform papillae. Expressed in the duodenum, antrum and fundus (part of the stomach).

It localises to the membrane. Functionally, receptor that may play a role in the perception of bitterness and is gustducin-linked. May play a role in sensing the chemical composition of the gastrointestinal content. The activity of this receptor may stimulate alpha gustducin, mediate PLC-beta-2 activation and lead to the gating of TRPM5. The chain is Taste receptor type 2 member 41 (Tas2r41) from Rattus norvegicus (Rat).